We begin with the raw amino-acid sequence, 227 residues long: Enolase-phosphatase E1 (227 aa).

Residues D11 and E13 each coordinate Mg(2+). Residues 118–119 and K161 contribute to the substrate site; that span reads SS. Residue D186 participates in Mg(2+) binding.

It belongs to the HAD-like hydrolase superfamily. MasA/MtnC family. Monomer. It depends on Mg(2+) as a cofactor.

The protein localises to the cytoplasm. Its subcellular location is the nucleus. The enzyme catalyses 5-methylsulfanyl-2,3-dioxopentyl phosphate + H2O = 1,2-dihydroxy-5-(methylsulfanyl)pent-1-en-3-one + phosphate. The protein operates within amino-acid biosynthesis; L-methionine biosynthesis via salvage pathway; L-methionine from S-methyl-5-thio-alpha-D-ribose 1-phosphate: step 3/6. Its pathway is amino-acid biosynthesis; L-methionine biosynthesis via salvage pathway; L-methionine from S-methyl-5-thio-alpha-D-ribose 1-phosphate: step 4/6. Its function is as follows. Bifunctional enzyme that catalyzes the enolization of 2,3-diketo-5-methylthiopentyl-1-phosphate (DK-MTP-1-P) into the intermediate 2-hydroxy-3-keto-5-methylthiopentenyl-1-phosphate (HK-MTPenyl-1-P), which is then dephosphorylated to form the acireductone 1,2-dihydroxy-3-keto-5-methylthiopentene (DHK-MTPene). In Saccharomyces cerevisiae (strain ATCC 204508 / S288c) (Baker's yeast), this protein is Enolase-phosphatase E1.